The sequence spans 255 residues: 5'-nucleotidase SurE (255 aa).

Residues Asp8, Asp9, Ser40, and Asn92 each contribute to the a divalent metal cation site.

The protein belongs to the SurE nucleotidase family. Requires a divalent metal cation as cofactor.

It localises to the cytoplasm. The enzyme catalyses a ribonucleoside 5'-phosphate + H2O = a ribonucleoside + phosphate. Its function is as follows. Nucleotidase that shows phosphatase activity on nucleoside 5'-monophosphates. This is 5'-nucleotidase SurE from Brucella canis (strain ATCC 23365 / NCTC 10854 / RM-666).